The following is a 216-amino-acid chain: Probable transaldolase (216 aa).

Lys83 acts as the Schiff-base intermediate with substrate in catalysis.

This sequence belongs to the transaldolase family. Type 3B subfamily.

The protein localises to the cytoplasm. The enzyme catalyses D-sedoheptulose 7-phosphate + D-glyceraldehyde 3-phosphate = D-erythrose 4-phosphate + beta-D-fructose 6-phosphate. The protein operates within carbohydrate degradation; pentose phosphate pathway; D-glyceraldehyde 3-phosphate and beta-D-fructose 6-phosphate from D-ribose 5-phosphate and D-xylulose 5-phosphate (non-oxidative stage): step 2/3. Functionally, transaldolase is important for the balance of metabolites in the pentose-phosphate pathway. The chain is Probable transaldolase from Clostridioides difficile (strain 630) (Peptoclostridium difficile).